Consider the following 510-residue polypeptide: RanBP-type and C3HC4-type zinc finger-containing protein 1 (510 aa).

Methionine 1 carries the post-translational modification N-acetylmethionine. Residues 1 to 220 are interaction with IRF3; the sequence is MDEKTKKAEE…PGCEMCCRAR (220 aa). The tract at residues 1-270 is interaction with TAB2; the sequence is MDEKTKKAEE…NYLQHVQLDQ (270 aa). Serine 50 carries the post-translational modification Phosphoserine. In terms of domain architecture, Ubiquitin-like spans 55–119; it reads IRLWVSVEDA…DQETLHSHGV (65 aa). Residues 69–131 form an interaction with RNF31 region; the sequence is VTIWLTVRPD…NGDSAYLYLL (63 aa). The tract at residues 160–192 is disordered; it reads LTLQPRGPLEPGPPKPGVPQEPGRGQPDAVPEP. Residues 167–178 are compositionally biased toward pro residues; it reads PLEPGPPKPGVP. The RanBP2-type zinc-finger motif lies at 193–222; it reads PPVGWQCPGCTFINKPTRPGCEMCCRARPE. Residues 233–261 adopt a coiled-coil conformation; that stretch reads DEEERARLAGEEEALRQYQQRKQQQQEGN. The tract at residues 278–506 is TRIAD supradomain; the sequence is EPAECPVCYS…VNGIPCHPSC (229 aa). The Zn(2+) site is built by cysteine 282, cysteine 285, cysteine 300, histidine 302, cysteine 305, cysteine 308, and cysteine 323. The RING-type 1 zinc-finger motif lies at 282–332; it reads CPVCYSVLAPGEAVVLRECLHTFCRECLQGTIRNSQEAEVSCPFIDNTYSC. Tyrosine 330 is modified (phosphotyrosine). Zn(2+)-binding residues include cysteine 332, cysteine 371, cysteine 376, cysteine 391, cysteine 394, cysteine 399, cysteine 402, histidine 406, cysteine 411, cysteine 447, and cysteine 450. Residues 351–411 form an IBR-type zinc finger; it reads QRFLDLGISI…CKAIHEQMNC (61 aa). The RING-type 2; atypical zinc-finger motif lies at 447 to 476; it reads CPQCQIVVQKKDGCDWIRCTVCHTEICWVT. Cysteine 460 is an active-site residue. Zn(2+)-binding residues include cysteine 465 and cysteine 468.

It belongs to the RBR family. Component of the LUBAC complex (linear ubiquitin chain assembly complex) which consists of SHARPIN, RBCK1 and RNF31. LUBAC has a MW of approximately 600 kDa suggesting a heteromultimeric assembly of its subunits. Interacts with beta-I-type (PRKCB1) and zeta-type protein kinase C (PRKCZ). Interacts with UBE2L3. Interacts with PRKCH. Associates with the TNF-R1 signaling complex (TNF-RSC) in a stimulation-dependent manner. Interacts with EYA1, TAB2, TAB3, MAP3K7 TRAF6 and RIPK1. Interacts with IRF3. In terms of assembly, interacts with IREB2 only in iron-rich conditions. As to quaternary structure, (Microbial infection) Interacts with hepatitis B virus/HBV protein HBx; this interaction is required to activate transcription of the viral genome. In terms of processing, auto-ubiquitinated. Auto-ubiquitination leads to degradation by the proteasome. Post-translationally, phosphorylated. In vitro, phosphorylation inhibits auto-ubiquitination activity. (Microbial infection) Ubiquitinated by S.flexneri E3 ubiquitin-protein ligases IpaH1.4 and IpaH2.5, leading to its degradation by the proteasome, thereby preventing formation of the bacterial ubiquitin coat and activation of innate immunity.

It carries out the reaction [E2 ubiquitin-conjugating enzyme]-S-ubiquitinyl-L-cysteine + [acceptor protein]-L-lysine = [E2 ubiquitin-conjugating enzyme]-L-cysteine + [acceptor protein]-N(6)-ubiquitinyl-L-lysine.. The protein operates within protein modification; protein ubiquitination. Functionally, E3 ubiquitin-protein ligase, which accepts ubiquitin from specific E2 ubiquitin-conjugating enzymes, such as UBE2L3/UBCM4, and then transfers it to substrates. Functions as an E3 ligase for oxidized IREB2 and both heme and oxygen are necessary for IREB2 ubiquitination. Promotes ubiquitination of TAB2 and IRF3 and their degradation by the proteasome. Component of the LUBAC complex which conjugates linear ('Met-1'-linked) polyubiquitin chains to substrates and plays a key role in NF-kappa-B activation and regulation of inflammation. LUBAC conjugates linear polyubiquitin to IKBKG and RIPK1 and is involved in activation of the canonical NF-kappa-B and the JNK signaling pathways. Linear ubiquitination mediated by the LUBAC complex interferes with TNF-induced cell death and thereby prevents inflammation. LUBAC is recruited to the TNF-R1 signaling complex (TNF-RSC) following polyubiquitination of TNF-RSC components by BIRC2 and/or BIRC3 and to conjugate linear polyubiquitin to IKBKG and possibly other components contributing to the stability of the complex. The LUBAC complex is also involved in innate immunity by conjugating linear polyubiquitin chains at the surface of bacteria invading the cytosol to form the ubiquitin coat surrounding bacteria. LUBAC is not able to initiate formation of the bacterial ubiquitin coat, and can only promote formation of linear polyubiquitins on pre-existing ubiquitin. The bacterial ubiquitin coat acts as an 'eat-me' signal for xenophagy and promotes NF-kappa-B activation. Together with OTULIN, the LUBAC complex regulates the canonical Wnt signaling during angiogenesis. Binds polyubiquitin of different linkage types. In Homo sapiens (Human), this protein is RanBP-type and C3HC4-type zinc finger-containing protein 1 (RBCK1).